The sequence spans 258 residues: Imidazole glycerol phosphate synthase subunit HisF (258 aa).

Residues Asp-11 and Asp-130 contribute to the active site.

The protein belongs to the HisA/HisF family. Heterodimer of HisH and HisF.

Its subcellular location is the cytoplasm. The catalysed reaction is 5-[(5-phospho-1-deoxy-D-ribulos-1-ylimino)methylamino]-1-(5-phospho-beta-D-ribosyl)imidazole-4-carboxamide + L-glutamine = D-erythro-1-(imidazol-4-yl)glycerol 3-phosphate + 5-amino-1-(5-phospho-beta-D-ribosyl)imidazole-4-carboxamide + L-glutamate + H(+). The protein operates within amino-acid biosynthesis; L-histidine biosynthesis; L-histidine from 5-phospho-alpha-D-ribose 1-diphosphate: step 5/9. Its function is as follows. IGPS catalyzes the conversion of PRFAR and glutamine to IGP, AICAR and glutamate. The HisF subunit catalyzes the cyclization activity that produces IGP and AICAR from PRFAR using the ammonia provided by the HisH subunit. The chain is Imidazole glycerol phosphate synthase subunit HisF from Methylobacterium sp. (strain 4-46).